The chain runs to 197 residues: MAERKASVARDTLETQIKVSIDLDGTGKARFDTGVPFLDHMMDQIARHGLIDLDIECKGDLHIDDHHTVEDIGITLGQAFAKAIGDKKGIRRYGHAYVPLDEALSRVVIDFSGRPGLQMHVPFTRASVGGFDVDLFMEFFQGFVNHAQVTLHIDNLRGHNTHHQIETVFKAFGRALRMAIELDERMAGQMPSTKGCL.

This sequence belongs to the imidazoleglycerol-phosphate dehydratase family.

The protein localises to the cytoplasm. The catalysed reaction is D-erythro-1-(imidazol-4-yl)glycerol 3-phosphate = 3-(imidazol-4-yl)-2-oxopropyl phosphate + H2O. Its pathway is amino-acid biosynthesis; L-histidine biosynthesis; L-histidine from 5-phospho-alpha-D-ribose 1-diphosphate: step 6/9. This is Imidazoleglycerol-phosphate dehydratase from Pseudomonas aeruginosa (strain LESB58).